Reading from the N-terminus, the 66-residue chain is Large ribosomal subunit protein bL33c (66 aa).

This sequence belongs to the bacterial ribosomal protein bL33 family.

It is found in the plastid. The protein resides in the chloroplast. The polypeptide is Large ribosomal subunit protein bL33c (Dioscorea elephantipes (Elephant's foot yam)).